The sequence spans 183 residues: RFKKIRRLGALPGLTSKRPRSGSDLKNQLRSGKRSQYRIRLEEKQKLRFHYGLTERQLLKYVHIAGKAKGSTGQILLQLLEMRLDNILFRLGMASTIPGARQLVNHRHILVNGRIVDIPSYRCKPRDIITTKNKQRSKALIQNFIASSPHQEELPNHLTIDPFQYKGLVNKIIDSKWIGLKIN.

Residues 82-143 (MRLDNILFRL…KQRSKALIQN (62 aa)) enclose the S4 RNA-binding domain.

Belongs to the universal ribosomal protein uS4 family. In terms of assembly, part of the 30S ribosomal subunit. Contacts protein S5. The interaction surface between S4 and S5 is involved in control of translational fidelity.

The protein resides in the plastid. It is found in the chloroplast. Its function is as follows. One of the primary rRNA binding proteins, it binds directly to 16S rRNA where it nucleates assembly of the body of the 30S subunit. In terms of biological role, with S5 and S12 plays an important role in translational accuracy. This chain is Small ribosomal subunit protein uS4c (rps4), found in Babiana stricta (Baboon flower).